A 461-amino-acid polypeptide reads, in one-letter code: Photosystem II CP43 reaction center protein (461 aa).

Positions 1-2 (ME) are excised as a propeptide. Thr-3 carries the N-acetylthreonine modification. Position 3 is a phosphothreonine (Thr-3). The next 5 helical transmembrane spans lie at 57–81 (LFEV…PHLA), 122–143 (LIGP…KDKS), 166–188 (KSVY…RKIT), 243–263 (KPFA…LSYS), and 279–300 (WFNN…ASQA). Glu-355 serves as a coordination point for [CaMn4O5] cluster. A helical transmembrane segment spans residues 435–459 (RARAAAAGFEKGIDRDTEPVLSMTP).

The protein belongs to the PsbB/PsbC family. PsbC subfamily. PSII is composed of 1 copy each of membrane proteins PsbA, PsbB, PsbC, PsbD, PsbE, PsbF, PsbH, PsbI, PsbJ, PsbK, PsbL, PsbM, PsbT, PsbX, PsbY, PsbZ, Psb30/Ycf12, at least 3 peripheral proteins of the oxygen-evolving complex and a large number of cofactors. It forms dimeric complexes. Binds multiple chlorophylls and provides some of the ligands for the Ca-4Mn-5O cluster of the oxygen-evolving complex. It may also provide a ligand for a Cl- that is required for oxygen evolution. PSII binds additional chlorophylls, carotenoids and specific lipids. serves as cofactor.

The protein localises to the plastid. The protein resides in the chloroplast thylakoid membrane. In terms of biological role, one of the components of the core complex of photosystem II (PSII). It binds chlorophyll and helps catalyze the primary light-induced photochemical processes of PSII. PSII is a light-driven water:plastoquinone oxidoreductase, using light energy to abstract electrons from H(2)O, generating O(2) and a proton gradient subsequently used for ATP formation. The sequence is that of Photosystem II CP43 reaction center protein from Psilotum nudum (Whisk fern).